The chain runs to 112 residues: Small ribosomal subunit protein bS6 (112 aa).

This sequence belongs to the bacterial ribosomal protein bS6 family.

In terms of biological role, binds together with bS18 to 16S ribosomal RNA. The chain is Small ribosomal subunit protein bS6 (rpsF) from Chlamydia pneumoniae (Chlamydophila pneumoniae).